Here is a 226-residue protein sequence, read N- to C-terminus: Ribosomal RNA small subunit methyltransferase Nep1 (226 aa).

S-adenosyl-L-methionine contacts are provided by residues Gly176, Gly181, and 197-202 (IYEESL).

The protein belongs to the class IV-like SAM-binding methyltransferase superfamily. RNA methyltransferase NEP1 family. As to quaternary structure, homodimer.

The catalysed reaction is a pseudouridine in rRNA + S-adenosyl-L-methionine = an N(1)-methylpseudouridine in rRNA + S-adenosyl-L-homocysteine + H(+). Its function is as follows. Methyltransferase involved in ribosomal biogenesis. Specifically catalyzes the N1-methylation of the pseudouridine corresponding to position 914 in M.jannaschii 16S rRNA. The polypeptide is Ribosomal RNA small subunit methyltransferase Nep1 (Methanothrix thermoacetophila (strain DSM 6194 / JCM 14653 / NBRC 101360 / PT) (Methanosaeta thermophila)).